The chain runs to 393 residues: Protein TsgA (393 aa).

Over 1–10 (MTNSNRIKLT) the chain is Cytoplasmic. A helical transmembrane segment spans residues 11–31 (WISFLSYALTGALVIVTGMVM). The Periplasmic segment spans residues 32–50 (GNIADYFHLPVSSMSNTFT). The chain crosses the membrane as a helical span at residues 51–71 (FLNAGILISIFLNAWLMEIVP). Residues 72–77 (LKTQLR) lie on the Cytoplasmic side of the membrane. A helical membrane pass occupies residues 78–98 (FGFILMVLAVAGLMFSHSLAL). Topologically, residues 99-100 (FS) are periplasmic. Residues 101–121 (AAMFVLGLVSGITMSIGTFLI) traverse the membrane as a helical segment. Residues 122-133 (TQLYEGRQRGSR) are Cytoplasmic-facing. A helical transmembrane segment spans residues 134–154 (LLFTDSFFSMAGMIFPMVAAF). The Periplasmic segment spans residues 155–161 (LLARSIE). The chain crosses the membrane as a helical span at residues 162-182 (WYWVYACIGLVYLAIFILTFG). Residues 183–205 (CEFPALGKHAQHSQAPVVKEKWG) lie on the Cytoplasmic side of the membrane. Residues 206-226 (IGVLFLAVAALCYILGQLGFI) traverse the membrane as a helical segment. Topologically, residues 227-244 (SWVPEYAKGLGMSLNDAG) are periplasmic. The helical transmembrane segment at 245–265 (ALVSDFWMSYMFGMWAFSFIL) threads the bilayer. Over 266–272 (RFFDLQR) the chain is Cytoplasmic. The helical transmembrane segment at 273–293 (ILTVLAGMAAVLMYLFITGTQ) threads the bilayer. The Periplasmic portion of the chain corresponds to 294 to 297 (AHMP). A helical transmembrane segment spans residues 298 to 318 (WFILTLGFFSSAIYTSIITLG). The Cytoplasmic portion of the chain corresponds to 319 to 331 (SQQTKVASPKLVN). Residues 332–352 (FILTCGTIGTMLTFVVTGPIV) form a helical membrane-spanning segment. Residues 353–360 (AHSGPQAA) are Periplasmic-facing. A helical transmembrane segment spans residues 361 to 381 (LLTANGLYAVVFVMCFALGFV). The Cytoplasmic segment spans residues 382 to 393 (SRHRQHSSPAAH).

This sequence belongs to the major facilitator superfamily. TsgA family.

It is found in the cell inner membrane. In Salmonella paratyphi A (strain ATCC 9150 / SARB42), this protein is Protein TsgA.